Here is a 714-residue protein sequence, read N- to C-terminus: Macrophage-expressed gene 1 protein (714 aa).

An N-terminal signal peptide occupies residues 1 to 19 (MNSFMAIALIWMMIACAEA). Positions 30 to 345 (GFQTCKDTLK…TAVRHYYTFN (316 aa)) constitute an MACPF domain. A disulfide bridge connects residues Cys34 and Cys70. 2 beta stranded membrane passes run 113 to 120 (FSINTELS) and 127 to 132 (GKFSTE). A glycan (N-linked (GlcNAc...) asparagine) is linked at Asn185. The next 2 beta stranded transmembrane spans lie at 235-244 (TVTASAGIAF) and 248-256 (VNFKVETDH). N-linked (GlcNAc...) asparagine glycosylation occurs at Asn269. An intrachain disulfide couples Cys350 to Cys369. An N-linked (GlcNAc...) asparagine glycan is attached at Asn375. 5 disulfides stabilise this stretch: Cys385/Cys394, Cys432/Cys446, Cys436/Cys442, Cys531/Cys569, and Cys554/Cys574. The P2 stretch occupies residues 410 to 653 (PSGYTPVHLL…GDGNGMSGGE (244 aa)). The helical transmembrane segment at 654 to 674 (AAGVTLGVIIALGIVITLAIY) threads the bilayer. The interval 690–714 (EQESLVGSFATDASPPNGEQDPCPA) is disordered.

It belongs to the MPEG1 family. Homooligomer; predominantly forms a homooligomeric arc-shaped pore complex instead of complete rings of 16 subunits. Post-translationally, proteolytically processed in two steps to generate the Macrophage-expressed gene 1 protein, processed form: cleaved by trypsin in proximity of the helical transmembrane domain releases the ectodomain into the lysosomal lumen to orient the pore-forming domain toward the endogenous membranes, and processed by the asparagine endopeptidase (LGMN). Proteolytic processing in antigen-containing vesicles is pH-dependent. Monoubiquitinated in response to bacterial infection; ubiquitination is required for vesicular localization and antibacterial activity and can be blocked by bacterial cell cycle inhibiting factor (cif).

The protein localises to the cytoplasmic vesicle membrane. The protein resides in the cytoplasmic vesicle. It localises to the phagosome membrane. Its activity is regulated as follows. Forms arc- and ring-shaped pre-pores on top of the membrane at neutral to slightly acidic pH conditions and converts to pores upon acidification. Undergoes transition from the pre-pore to the pore in a processive clockwise hand-over-hand process. In the pore state, 2 alpha-helical regions refold into transmembrane hairpins (TMH1 and TMH2) in each protomer that form in the ensemble complex giant beta-barrel transmembrane pores. Pore-forming protein involved in both innate and adaptive immunity. Plays a central role in antigen cross-presentation in dendritic cells by forming a pore in antigen-containing compartments, thereby promoting delivery of antigens for cross-presentation. Also involved in innate immune response following bacterial infection; shows antibacterial activity against a wide spectrum of Gram-positive, Gram-negative and acid-fast bacteria. Reduces the viability of the intracytosolic pathogen L.monocytogenes by inhibiting acidification of the phagocytic vacuole of host cells which restricts bacterial translocation from the vacuole to the cytosol. Required for the antibacterial activity of reactive oxygen species and nitric oxide. Its function is as follows. Pore-forming protein that plays a central role in antigen cross-presentation in dendritic cells by mediating delivery of antigens for cross-presentation. Dendritic cells bridge innate and adaptive immunity by capturing exogenous antigens on MHC class-I molecules and presenting them to naive CD8(+) T-cells. Acts by forming a pore in antigen-containing compartments, promoting the release of antigens into the cytosol, enabling generation of MHCI:peptide complexes and T-cell priming. In Rattus norvegicus (Rat), this protein is Macrophage-expressed gene 1 protein (Mpeg1).